The following is a 364-amino-acid chain: Succinyl-diaminopimelate desuccinylase (364 aa).

His-64 is a binding site for Zn(2+). The active site involves Asp-66. A Zn(2+)-binding site is contributed by Asp-95. Glu-125 serves as the catalytic Proton acceptor. The Zn(2+) site is built by Glu-126, Glu-154, and His-339.

The protein belongs to the peptidase M20A family. DapE subfamily. Homodimer. Zn(2+) serves as cofactor. It depends on Co(2+) as a cofactor.

It catalyses the reaction N-succinyl-(2S,6S)-2,6-diaminopimelate + H2O = (2S,6S)-2,6-diaminopimelate + succinate. Its pathway is amino-acid biosynthesis; L-lysine biosynthesis via DAP pathway; LL-2,6-diaminopimelate from (S)-tetrahydrodipicolinate (succinylase route): step 3/3. Catalyzes the hydrolysis of N-succinyl-L,L-diaminopimelic acid (SDAP), forming succinate and LL-2,6-diaminopimelate (DAP), an intermediate involved in the bacterial biosynthesis of lysine and meso-diaminopimelic acid, an essential component of bacterial cell walls. The chain is Succinyl-diaminopimelate desuccinylase from Nitratiruptor sp. (strain SB155-2).